Consider the following 207-residue polypeptide: Recombination protein RecR (207 aa).

Residues 62 to 77 (CSRCNTFTEQDVCETC) form a C4-type zinc finger. Positions 85–184 (SVLCVVETPA…KVSRLARGVP (100 aa)) constitute a Toprim domain.

The protein belongs to the RecR family.

May play a role in DNA repair. It seems to be involved in an RecBC-independent recombinational process of DNA repair. It may act with RecF and RecO. The polypeptide is Recombination protein RecR (Ralstonia nicotianae (strain ATCC BAA-1114 / GMI1000) (Ralstonia solanacearum)).